The primary structure comprises 476 residues: Adenosylhomocysteinase (476 aa).

Threonine 67, aspartate 142, and glutamate 202 together coordinate substrate. 203-205 provides a ligand contact to NAD(+); sequence TTT. Lysine 232 and aspartate 236 together coordinate substrate. NAD(+)-binding positions include asparagine 237, 266–271, glutamate 289, asparagine 324, 345–347, and asparagine 390; these read GYGDVG and IGH.

This sequence belongs to the adenosylhomocysteinase family. It depends on NAD(+) as a cofactor.

Its subcellular location is the cytoplasm. It carries out the reaction S-adenosyl-L-homocysteine + H2O = L-homocysteine + adenosine. It participates in amino-acid biosynthesis; L-homocysteine biosynthesis; L-homocysteine from S-adenosyl-L-homocysteine: step 1/1. May play a key role in the regulation of the intracellular concentration of adenosylhomocysteine. This is Adenosylhomocysteinase from Synechococcus sp. (strain WH7803).